Consider the following 555-residue polypeptide: Glutamine--tRNA ligase (555 aa).

Residues 34-44 (PEPNGYLHIGH) carry the 'HIGH' region motif. ATP is bound by residues 35-37 (EPN) and 41-47 (HIGHAKS). L-glutamine-binding residues include Asp67 and Tyr212. ATP contacts are provided by residues Thr231, 261–262 (RL), and 269–271 (MSK). A 'KMSKS' region motif is present at residues 268–272 (VMSKR). Residues 317–324 (TKQDNTIE) form an interaction with tRNA region.

This sequence belongs to the class-I aminoacyl-tRNA synthetase family. In terms of assembly, monomer.

It is found in the cytoplasm. The catalysed reaction is tRNA(Gln) + L-glutamine + ATP = L-glutaminyl-tRNA(Gln) + AMP + diphosphate. The chain is Glutamine--tRNA ligase from Citrobacter koseri (strain ATCC BAA-895 / CDC 4225-83 / SGSC4696).